A 200-amino-acid chain; its full sequence is Dipicolinate synthase subunit B (200 aa).

As to quaternary structure, dipicolinate synthase likely consists of DpaA and DpaB, since both proteins are required for DPA synthesis.

It catalyses the reaction (S)-2,3-dihydrodipicolinate + NADP(+) = dipicolinate + NADPH + H(+). Together with DpaA, catalyzes the conversion of dihydrodipicolinate to dipicolinate (DPA), which constitutes up to 10% of the dry weight of the spore. The sequence is that of Dipicolinate synthase subunit B (dpaB) from Bacillus subtilis (strain 168).